Reading from the N-terminus, the 328-residue chain is uncharacterized protein (328 aa).

The G-patch domain occupies 10 to 55 (KMGFGHAMLLKMGWKGKGLGVEEDGRTEIIVNKKKQDKVGVGASIS). A disordered region spans residues 97 to 291 (EKITFKRTIK…KKSFSVSKTR (195 aa)). Over residues 101–110 (FKRTIKKNSK) the composition is skewed to basic residues. The span at 116 to 126 (SDSDSDSDSES) shows a compositional bias: acidic residues. 2 stretches are compositionally biased toward low complexity: residues 141–158 (DSDSSCSDSSSSSSSSSS) and 210–240 (SSSSSDDSCSSESDSSSSSSSSSSSSDSSSE). The span at 248-257 (KNKNKNKNKK) shows a compositional bias: basic residues.

This is an uncharacterized protein from Dictyostelium discoideum (Social amoeba).